Consider the following 260-residue polypeptide: Small ribosomal subunit protein uS2 (260 aa).

This sequence belongs to the universal ribosomal protein uS2 family.

The polypeptide is Small ribosomal subunit protein uS2 (Roseobacter denitrificans (strain ATCC 33942 / OCh 114) (Erythrobacter sp. (strain OCh 114))).